The chain runs to 804 residues: Leucine--tRNA ligase (804 aa).

The 'HIGH' region signature appears at 40 to 51; it reads PYPSGAGLHVGH. Residues 576 to 580 carry the 'KMSKS' region motif; that stretch reads KMSKS. Lysine 579 serves as a coordination point for ATP.

It belongs to the class-I aminoacyl-tRNA synthetase family.

It is found in the cytoplasm. It carries out the reaction tRNA(Leu) + L-leucine + ATP = L-leucyl-tRNA(Leu) + AMP + diphosphate. The chain is Leucine--tRNA ligase from Bacillus pumilus (strain SAFR-032).